The chain runs to 1081 residues: Importin-4 (1081 aa).

Residue Met1 is modified to N-acetylmethionine. An Importin N-terminal domain is found at 24 to 90 (ATEQLQIVLR…KSLILTALQR (67 aa)). HEAT repeat units follow at residues 348-385 (KLCP…GAGD), 390-427 (RLLP…NLQP), 431-471 (SYSR…NLGP), 475-513 (PYLP…AAQA), 895-932 (QFVS…HGGH), and 936-974 (EHFP…ASPT).

Belongs to the importin beta family. As to quaternary structure, found in a cytosolic complex with ASF1 (ASF1A or ASF1B) and histones H3 and H4.

The protein localises to the cytoplasm. The protein resides in the nucleus. Its function is as follows. Nuclear transport receptor that mediates nuclear import of proteins, such as histones, RPS3A, TNP2 and VDR. Serves as receptor for nuclear localization signals (NLS) in cargo substrates. Is thought to mediate docking of the importin/substrate complex to the nuclear pore complex (NPC) through binding to nucleoporin and the complex is subsequently translocated through the pore by an energy requiring, Ran-dependent mechanism. At the nucleoplasmic side of the NPC, Ran binds to the importin, the importin/substrate complex dissociates and importin is re-exported from the nucleus to the cytoplasm where GTP hydrolysis releases Ran. The directionality of nuclear import is thought to be conferred by an asymmetric distribution of the GTP- and GDP-bound forms of Ran between the cytoplasm and nucleus. Mediates the nuclear import of the histone H3-H4 dimer when in complex with ASF1 (ASF1A or ASF1B). Mediates the ligand-independent nuclear import of vitamin D receptor (VDR). In vitro, mediates the nuclear import of human cytomegalovirus UL84 by recognizing a non-classical NLS. The polypeptide is Importin-4 (IPO4) (Homo sapiens (Human)).